The following is a 132-amino-acid chain: DNA-binding protein inhibitor ID-2 (132 aa).

The 53-residue stretch at 23–75 (ARSKTPVDDPMSLLYNMNDCYSKLKELVPSIPQNKKVSKMEILQHVIDYILDL) folds into the bHLH domain. The Nuclear export signal motif lies at 105 to 114 (LNTDISILSL).

In terms of assembly, heterodimer with other HLH proteins.

It localises to the cytoplasm. The protein resides in the nucleus. Functionally, transcriptional regulator (lacking a basic DNA binding domain) which negatively regulates the basic helix-loop-helix (bHLH) transcription factors by forming heterodimers and inhibiting their DNA binding and transcriptional activity. Inhibits the activity of both neurogenic (neurod1/neuroD) and myogenic (myod1/myoD) bHLH factors. May play a role in the regulation of the circadian clock. In Xenopus tropicalis (Western clawed frog), this protein is DNA-binding protein inhibitor ID-2.